Consider the following 1027-residue polypeptide: A-factor-processing enzyme (1027 aa).

His118 serves as a coordination point for Zn(2+). Residue Glu121 is the Proton acceptor of the active site. Zn(2+)-binding residues include His122 and Glu199.

Belongs to the peptidase M16 family. The cofactor is Zn(2+).

It localises to the membrane. With respect to regulation, inhibited by chelating agents like EDTA, TPEN and 1,1-phenanthroline, as well as NEM, free cysteine and DTT. Involved in the N-terminal endoproteolytic cleavage of the P2 precursor of the a-factor mating pheromone. Capable of proteolysing the established mammalian insulin-degrading enzymes (IDEs) substrates amyloid-beta peptide and insulin B-chain. This chain is A-factor-processing enzyme (STE23), found in Saccharomyces cerevisiae (strain ATCC 204508 / S288c) (Baker's yeast).